A 129-amino-acid polypeptide reads, in one-letter code: Iron-sulfur cluster assembly 1 homolog, mitochondrial (129 aa).

The N-terminal 12 residues, 1–12 (MSASLVRATVRA), are a transit peptide targeting the mitochondrion. Residues C57, C121, and C123 each contribute to the Fe cation site.

This sequence belongs to the HesB/IscA family. Interacts with CRY2, but not with CRY1 (in vitro).

It localises to the mitochondrion. Its function is as follows. Involved in the maturation of mitochondrial 4Fe-4S proteins functioning late in the iron-sulfur cluster assembly pathway. Probably involved in the binding of an intermediate of Fe/S cluster assembly. The polypeptide is Iron-sulfur cluster assembly 1 homolog, mitochondrial (Isca1) (Rattus norvegicus (Rat)).